The following is a 227-amino-acid chain: Cytochrome c oxidase subunit 2 (227 aa).

The Mitochondrial intermembrane portion of the chain corresponds to 1 to 14; it reads MAYPFQLGFQDATS. A helical transmembrane segment spans residues 15-45; the sequence is PIMEELLHFHDHTLMIVFLISSLVLYIITLM. Over 46 to 59 the chain is Mitochondrial matrix; sequence LTTKLTHTSTMDAQ. A helical membrane pass occupies residues 60–87; sequence EVETVWTILPAIILILIALPSLRILYMM. Over 88-227 the chain is Mitochondrial intermembrane; sequence DEVNNPSLTV…FFEKWSASML (140 aa). Cu cation contacts are provided by His161, Cys196, Glu198, Cys200, His204, and Met207. Glu198 is a binding site for Mg(2+).

The protein belongs to the cytochrome c oxidase subunit 2 family. In terms of assembly, component of the cytochrome c oxidase (complex IV, CIV), a multisubunit enzyme composed of 14 subunits. The complex is composed of a catalytic core of 3 subunits MT-CO1, MT-CO2 and MT-CO3, encoded in the mitochondrial DNA, and 11 supernumerary subunits COX4I, COX5A, COX5B, COX6A, COX6B, COX6C, COX7A, COX7B, COX7C, COX8 and NDUFA4, which are encoded in the nuclear genome. The complex exists as a monomer or a dimer and forms supercomplexes (SCs) in the inner mitochondrial membrane with NADH-ubiquinone oxidoreductase (complex I, CI) and ubiquinol-cytochrome c oxidoreductase (cytochrome b-c1 complex, complex III, CIII), resulting in different assemblies (supercomplex SCI(1)III(2)IV(1) and megacomplex MCI(2)III(2)IV(2)). Found in a complex with TMEM177, COA6, COX18, COX20, SCO1 and SCO2. Interacts with TMEM177 in a COX20-dependent manner. Interacts with COX20. Interacts with COX16. Cu cation is required as a cofactor.

The protein localises to the mitochondrion inner membrane. It carries out the reaction 4 Fe(II)-[cytochrome c] + O2 + 8 H(+)(in) = 4 Fe(III)-[cytochrome c] + 2 H2O + 4 H(+)(out). Component of the cytochrome c oxidase, the last enzyme in the mitochondrial electron transport chain which drives oxidative phosphorylation. The respiratory chain contains 3 multisubunit complexes succinate dehydrogenase (complex II, CII), ubiquinol-cytochrome c oxidoreductase (cytochrome b-c1 complex, complex III, CIII) and cytochrome c oxidase (complex IV, CIV), that cooperate to transfer electrons derived from NADH and succinate to molecular oxygen, creating an electrochemical gradient over the inner membrane that drives transmembrane transport and the ATP synthase. Cytochrome c oxidase is the component of the respiratory chain that catalyzes the reduction of oxygen to water. Electrons originating from reduced cytochrome c in the intermembrane space (IMS) are transferred via the dinuclear copper A center (CU(A)) of subunit 2 and heme A of subunit 1 to the active site in subunit 1, a binuclear center (BNC) formed by heme A3 and copper B (CU(B)). The BNC reduces molecular oxygen to 2 water molecules using 4 electrons from cytochrome c in the IMS and 4 protons from the mitochondrial matrix. In Balaenoptera musculus (Blue whale), this protein is Cytochrome c oxidase subunit 2 (MT-CO2).